Reading from the N-terminus, the 487-residue chain is Steroid 21-hydroxylase (487 aa).

Positions 92 and 117 each coordinate heme b. R228 contributes to the 17alpha-hydroxyprogesterone binding site. Position 228 (R228) interacts with progesterone. Heme b is bound by residues H357, R418, and C420.

It belongs to the cytochrome P450 family. Heme b is required as a cofactor.

The protein resides in the endoplasmic reticulum membrane. It is found in the microsome membrane. It carries out the reaction progesterone + reduced [NADPH--hemoprotein reductase] + O2 = 21-hydroxyprogesterone + oxidized [NADPH--hemoprotein reductase] + H2O + H(+). The enzyme catalyses 17alpha-hydroxyprogesterone + reduced [NADPH--hemoprotein reductase] + O2 = 11-deoxycortisol + oxidized [NADPH--hemoprotein reductase] + H2O + H(+). Its function is as follows. A cytochrome P450 monooxygenase that plays a major role in adrenal steroidogenesis. Catalyzes the hydroxylation at C-21 of progesterone and 17alpha-hydroxyprogesterone to respectively form 11-deoxycorticosterone and 11-deoxycortisol, intermediate metabolites in the biosynthetic pathway of mineralocorticoids and glucocorticoids. Mechanistically, uses molecular oxygen inserting one oxygen atom into a substrate, and reducing the second into a water molecule, with two electrons provided by NADPH via cytochrome P450 reductase (CPR; NADPH-ferrihemoprotein reductase). This is Steroid 21-hydroxylase (Cyp21) from Mus musculus (Mouse).